Here is a 409-residue protein sequence, read N- to C-terminus: 4-hydroxy-3-methylbut-2-en-1-yl diphosphate synthase (ferredoxin) (409 aa).

The span at Met1 to Gln12 shows a compositional bias: polar residues. The segment at Met1–Arg22 is disordered. Residues Cys314, Cys317, Cys348, and Glu355 each coordinate [4Fe-4S] cluster.

It belongs to the IspG family. The cofactor is [4Fe-4S] cluster.

It carries out the reaction (2E)-4-hydroxy-3-methylbut-2-enyl diphosphate + 2 oxidized [2Fe-2S]-[ferredoxin] + H2O = 2-C-methyl-D-erythritol 2,4-cyclic diphosphate + 2 reduced [2Fe-2S]-[ferredoxin] + H(+). Its pathway is isoprenoid biosynthesis; isopentenyl diphosphate biosynthesis via DXP pathway; isopentenyl diphosphate from 1-deoxy-D-xylulose 5-phosphate: step 5/6. Converts 2C-methyl-D-erythritol 2,4-cyclodiphosphate (ME-2,4cPP) into 1-hydroxy-2-methyl-2-(E)-butenyl 4-diphosphate. This is 4-hydroxy-3-methylbut-2-en-1-yl diphosphate synthase (ferredoxin) from Synechococcus sp. (strain JA-2-3B'a(2-13)) (Cyanobacteria bacterium Yellowstone B-Prime).